Consider the following 412-residue polypeptide: Nuclear hormone receptor family member nhr-61 (412 aa).

Low complexity predominate over residues methionine 1–threonine 19. Residues methionine 1–proline 23 are disordered. The segment at residues serine 27 to glycine 102 is a DNA-binding region (nuclear receptor). NR C4-type zinc fingers lie at residues cysteine 30–cysteine 50 and cysteine 66–cysteine 90. In terms of domain architecture, NR LBD spans lysine 144–arginine 407.

It belongs to the nuclear hormone receptor family.

Its subcellular location is the nucleus. Functionally, orphan nuclear receptor. The polypeptide is Nuclear hormone receptor family member nhr-61 (nhr-61) (Caenorhabditis elegans).